The primary structure comprises 298 residues: 4-hydroxy-tetrahydrodipicolinate synthase (298 aa).

Position 48 (Thr-48) interacts with pyruvate. The active-site Proton donor/acceptor is the Tyr-137. The Schiff-base intermediate with substrate role is filled by Lys-166. Residue Ile-207 participates in pyruvate binding.

This sequence belongs to the DapA family. In terms of assembly, homotetramer; dimer of dimers.

The protein resides in the cytoplasm. It catalyses the reaction L-aspartate 4-semialdehyde + pyruvate = (2S,4S)-4-hydroxy-2,3,4,5-tetrahydrodipicolinate + H2O + H(+). Its pathway is amino-acid biosynthesis; L-lysine biosynthesis via DAP pathway; (S)-tetrahydrodipicolinate from L-aspartate: step 3/4. Functionally, catalyzes the condensation of (S)-aspartate-beta-semialdehyde [(S)-ASA] and pyruvate to 4-hydroxy-tetrahydrodipicolinate (HTPA). This chain is 4-hydroxy-tetrahydrodipicolinate synthase, found in Campylobacter jejuni subsp. jejuni serotype O:23/36 (strain 81-176).